A 508-amino-acid chain; its full sequence is Aspartic proteinase A3 (508 aa).

Positions 1–25 (MGTRFQSFLLVFLLSCLILISTASC) are cleaved as a signal peptide. Positions 26-69 (ERNGDGTIRIGLKKRKLDRSNRLASQLFLKNRGSHWSPKHYFRL) are cleaved as a propeptide — activation peptide. One can recognise a Peptidase A1 domain in the interval 87-505 (YYGDITIGTP…DYGKGRVGFA (419 aa)). D105 is an active-site residue. Intrachain disulfides connect C118–C124 and C283–C287. D292 is a catalytic residue. One can recognise a Saposin B-type domain in the interval 317–419 (IVSRECKAVV…AELCDHIPTQ (103 aa)). Cystine bridges form between C322/C413, C347/C385, C353/C382, and C427/C464. N399 carries N-linked (GlcNAc...) asparagine glycosylation.

Belongs to the peptidase A1 family. As to expression, expressed in petals, carpels and seed pods.

The protein localises to the secreted. Involved in the processing and degradation of storage proteins. This chain is Aspartic proteinase A3 (APA3), found in Arabidopsis thaliana (Mouse-ear cress).